Reading from the N-terminus, the 522-residue chain is Protein nucleotidyltransferase YdiU (522 aa).

The ATP site is built by G109, G111, R112, K132, D144, G145, R195, and R202. D271 functions as the Proton acceptor in the catalytic mechanism. Mg(2+)-binding residues include N272 and D281. D281 provides a ligand contact to ATP.

It belongs to the SELO family. Mg(2+) is required as a cofactor. It depends on Mn(2+) as a cofactor.

The catalysed reaction is L-seryl-[protein] + ATP = 3-O-(5'-adenylyl)-L-seryl-[protein] + diphosphate. It catalyses the reaction L-threonyl-[protein] + ATP = 3-O-(5'-adenylyl)-L-threonyl-[protein] + diphosphate. It carries out the reaction L-tyrosyl-[protein] + ATP = O-(5'-adenylyl)-L-tyrosyl-[protein] + diphosphate. The enzyme catalyses L-histidyl-[protein] + UTP = N(tele)-(5'-uridylyl)-L-histidyl-[protein] + diphosphate. The catalysed reaction is L-seryl-[protein] + UTP = O-(5'-uridylyl)-L-seryl-[protein] + diphosphate. It catalyses the reaction L-tyrosyl-[protein] + UTP = O-(5'-uridylyl)-L-tyrosyl-[protein] + diphosphate. Functionally, nucleotidyltransferase involved in the post-translational modification of proteins. It can catalyze the addition of adenosine monophosphate (AMP) or uridine monophosphate (UMP) to a protein, resulting in modifications known as AMPylation and UMPylation. This Burkholderia ambifaria (strain MC40-6) protein is Protein nucleotidyltransferase YdiU.